Here is a 102-residue protein sequence, read N- to C-terminus: Small ribosomal subunit protein uS10 (102 aa).

Belongs to the universal ribosomal protein uS10 family. Part of the 30S ribosomal subunit.

Involved in the binding of tRNA to the ribosomes. The protein is Small ribosomal subunit protein uS10 of Cupriavidus metallidurans (strain ATCC 43123 / DSM 2839 / NBRC 102507 / CH34) (Ralstonia metallidurans).